Here is an 878-residue protein sequence, read N- to C-terminus: Alanine--tRNA ligase (878 aa).

Residues histidine 567, histidine 571, cysteine 668, and histidine 672 each contribute to the Zn(2+) site.

This sequence belongs to the class-II aminoacyl-tRNA synthetase family. It depends on Zn(2+) as a cofactor.

It localises to the cytoplasm. It carries out the reaction tRNA(Ala) + L-alanine + ATP = L-alanyl-tRNA(Ala) + AMP + diphosphate. Its function is as follows. Catalyzes the attachment of alanine to tRNA(Ala) in a two-step reaction: alanine is first activated by ATP to form Ala-AMP and then transferred to the acceptor end of tRNA(Ala). Also edits incorrectly charged Ser-tRNA(Ala) and Gly-tRNA(Ala) via its editing domain. The chain is Alanine--tRNA ligase from Magnetococcus marinus (strain ATCC BAA-1437 / JCM 17883 / MC-1).